An 898-amino-acid polypeptide reads, in one-letter code: Eukaryotic translation initiation factor 3 subunit C (898 aa).

Positions 1–10 (MSRFFHAKED) are enriched in basic and acidic residues. Disordered regions lie at residues 1–38 (MSRF…DDLD) and 162–238 (VTDY…SVTK). The segment covering 11 to 23 (SDSDTSSSEDEVE) has biased composition (acidic residues). The segment covering 24 to 37 (DQKVNKSAKFRDDL) has biased composition (basic and acidic residues). Positions 170 to 187 (DEDGYETPEDEDDDDFGE) are enriched in acidic residues. Residues 189–202 (SESKAEKSPGKPSE) show a composition bias toward basic and acidic residues. The span at 209–218 (SDSDSDDDDS) shows a compositional bias: acidic residues. Residues 219 to 228 (SNWSSEPESN) are compositionally biased toward low complexity. The PCI domain occupies 630–806 (YHMHINVELM…DCLIMHRVEP (177 aa)). The segment at 829–898 (QILEPRTGRG…RRHPQKPRAF (70 aa)) is disordered. 2 stretches are compositionally biased toward basic and acidic residues: residues 850-859 (RNERQGDKQK) and 866-878 (GERR…DGKR). Residues 888–898 (QRRHPQKPRAF) are compositionally biased toward basic residues.

Belongs to the eIF-3 subunit C family. In terms of assembly, component of the eukaryotic translation initiation factor 3 (eIF-3) complex.

Its subcellular location is the cytoplasm. Functionally, component of the eukaryotic translation initiation factor 3 (eIF-3) complex, which is involved in protein synthesis of a specialized repertoire of mRNAs and, together with other initiation factors, stimulates binding of mRNA and methionyl-tRNAi to the 40S ribosome. The eIF-3 complex specifically targets and initiates translation of a subset of mRNAs involved in cell proliferation. This chain is Eukaryotic translation initiation factor 3 subunit C, found in Caenorhabditis elegans.